Here is a 169-residue protein sequence, read N- to C-terminus: Monothiol glutaredoxin-S15, mitochondrial (169 aa).

Residues 1-37 (MAASLSSRLIKGIANLKAVRSSRLTSASVYQNGMMRF) constitute a mitochondrion transit peptide. Residues 38 to 61 (SSTVPSDSDTHDDFKPTQKVPPDS) are disordered. A Glutaredoxin domain is found at 66 to 168 (KDIVENDVKD…QKLKDVSGNQ (103 aa)). Lysine 83 contributes to the glutathione binding site. Cysteine 91 serves as a coordination point for [2Fe-2S] cluster. Glutathione-binding positions include lysine 120, phenylalanine 132, and 145 to 146 (SD).

The protein belongs to the glutaredoxin family. CGFS subfamily. As to quaternary structure, [2Fe-2S]-bridged holo-homodimer. Interacts in vitro with SUFE1, BOLA1, BOLA2 and BOLA4. Interacts in vivo only with BOLA4.

It localises to the mitochondrion. Its function is as follows. May only reduce GSH-thiol disulfides, but not protein disulfides. Participates probably to the maturation of iron-sulfur proteins and to the regulation of the redox state of the BOLA proteins. The polypeptide is Monothiol glutaredoxin-S15, mitochondrial (Arabidopsis thaliana (Mouse-ear cress)).